The chain runs to 495 residues: UDP-N-acetylmuramoyl-L-alanyl-D-glutamate--2,6-diaminopimelate ligase (495 aa).

UDP-N-acetyl-alpha-D-muramoyl-L-alanyl-D-glutamate-binding positions include leucine 27, serine 29, and 44 to 46 (HQA). 116–122 (GTNGKTT) serves as a coordination point for ATP. UDP-N-acetyl-alpha-D-muramoyl-L-alanyl-D-glutamate contacts are provided by residues asparagine 157, 158 to 159 (TT), serine 185, glutamine 191, and arginine 193. An N6-carboxylysine modification is found at lysine 225. Residues arginine 390, 414-417 (DNPR), glycine 465, and glutamate 469 each bind meso-2,6-diaminopimelate. A Meso-diaminopimelate recognition motif motif is present at residues 414–417 (DNPR).

The protein belongs to the MurCDEF family. MurE subfamily. Mg(2+) serves as cofactor. Post-translationally, carboxylation is probably crucial for Mg(2+) binding and, consequently, for the gamma-phosphate positioning of ATP.

The protein resides in the cytoplasm. It carries out the reaction UDP-N-acetyl-alpha-D-muramoyl-L-alanyl-D-glutamate + meso-2,6-diaminopimelate + ATP = UDP-N-acetyl-alpha-D-muramoyl-L-alanyl-gamma-D-glutamyl-meso-2,6-diaminopimelate + ADP + phosphate + H(+). It participates in cell wall biogenesis; peptidoglycan biosynthesis. Functionally, catalyzes the addition of meso-diaminopimelic acid to the nucleotide precursor UDP-N-acetylmuramoyl-L-alanyl-D-glutamate (UMAG) in the biosynthesis of bacterial cell-wall peptidoglycan. This Salmonella choleraesuis (strain SC-B67) protein is UDP-N-acetylmuramoyl-L-alanyl-D-glutamate--2,6-diaminopimelate ligase.